A 128-amino-acid chain; its full sequence is Large ribosomal subunit protein bL20c (128 aa).

This sequence belongs to the bacterial ribosomal protein bL20 family.

Its subcellular location is the plastid. Its function is as follows. Binds directly to 23S ribosomal RNA and is necessary for the in vitro assembly process of the 50S ribosomal subunit. It is not involved in the protein synthesizing functions of that subunit. The chain is Large ribosomal subunit protein bL20c (rpl20) from Epifagus virginiana (Beechdrops).